Consider the following 313-residue polypeptide: Formimidoylglutamase (313 aa).

Positions 130, 155, 157, 159, 241, and 243 each coordinate Mn(2+).

Belongs to the arginase family. Mn(2+) is required as a cofactor.

The catalysed reaction is N-formimidoyl-L-glutamate + H2O = formamide + L-glutamate. Its pathway is amino-acid degradation; L-histidine degradation into L-glutamate; L-glutamate from N-formimidoyl-L-glutamate (hydrolase route): step 1/1. In terms of biological role, catalyzes the conversion of N-formimidoyl-L-glutamate to L-glutamate and formamide. The polypeptide is Formimidoylglutamase (Salmonella heidelberg (strain SL476)).